We begin with the raw amino-acid sequence, 253 residues long: MELEQREGTMAAVGFEEFSAPPGSELALPPLFGGHILESELETEVEFVSGGLGGSGLRERDEEEEAARGRRRRQRELNRRKYQALGRRCREIEQVNERVLNRLHQVQRITRRLQQERRFLMRVLDSYGDDYRASQFTIVLEDEGSQGTDAPTPGNAENEPPEKETLSPPRRTPAPPEPGSPAPGEGPSGRKRRRVPRDGRRAGNALTPELAPVQIKVEEDFGFEADEALDSSWVSRGPDKLLPYPTLASPASD.

Disordered regions lie at residues 49 to 72 (SGGLGGSGLRERDEEEEAARGRRR) and 142 to 211 (DEGS…PELA). Residue S167 is modified to Phosphoserine. Pro residues predominate over residues 170–181 (RRTPAPPEPGSP). T172 bears the Phosphothreonine mark. Phosphoserine occurs at positions 180 and 188. A Phosphothreonine modification is found at T207. K216 is covalently cross-linked (Glycyl lysine isopeptide (Lys-Gly) (interchain with G-Cter in SUMO2)). Residues 234-253 (VSRGPDKLLPYPTLASPASD) form a disordered region. 2 positions are modified to phosphoserine: S249 and S252.

In terms of assembly, interacts with NOL3; translocates NOL3 into the nucleus and negatively regulated TFPT-induced cell death. Component of the chromatin remodeling INO80 complex; specifically part of a complex module associated with the N-terminus of INO80.

Its subcellular location is the nucleus. Appears to promote apoptosis in a p53/TP53-independent manner. In terms of biological role, putative regulatory component of the chromatin remodeling INO80 complex which is involved in transcriptional regulation, DNA replication and probably DNA repair. This Homo sapiens (Human) protein is TCF3 fusion partner (TFPT).